Consider the following 281-residue polypeptide: LC-AMP precursor 3 (281 aa).

Residues Met-1–Ala-19 form the signal peptide. The propeptide occupies Arg-20–Arg-56. Leu-74 bears the Leucine amide mark. Residues Gly-75–Arg-89 constitute a propeptide that is removed on maturation. Ser-114 is subject to Serine amide. The propeptide occupies Gly-115–Arg-129. A Leucine amide modification is found at Leu-147. Positions Gly-148 to Arg-162 are excised as a propeptide. Leu-180 bears the Leucine amide mark. Positions Gly-181–Arg-195 are excised as a propeptide. Leu-213 carries the post-translational modification Leucine amide. Residues Gly-214–Arg-228 constitute a propeptide that is removed on maturation. Leu-246 is modified (leucine amide). Residues Gly-247–Arg-261 constitute a propeptide that is removed on maturation. Leu-279 is modified (leucine amide).

Expressed by the venom gland.

It is found in the secreted. Functionally, antimicrobial peptide that acts by influencing bacterial cell membrane permeability at low concentrations and by directly disrupting structure-function at high concentrations. Shows activity against Gram-negative bacteria (S.typhimurium CGMCC 1.1174 (MIC=2.5 uM), E.coli CCTCC AB 2018675 (MIC=5 uM), S.dysenteriae CGMCC 1.1869 (MIC=2.5 uM), P.aeruginosa CGMCC 1.596 (MIC 5-10 uM), K.pneumoniae (MIC=10 uM), A.baumannii (MIC=5-10 uM)), and Gram-positive bacteria (S.aureus CMCC 26003 or MRSA ATCC 43300 (MIC=5 uM), and E.faecium (MIC=2.5-5 uM)). Inhibits biofilm formation of E.coli and S.aureus in a dose-dependent manner and disrupts established biofilms. Demonstrates minimal bacterial resistance, excellent stability, negligible mammalian cell toxicity, low hemolytic activity, and appropriate selectivity for both normal and tumor cells. When combined with traditional antibiotics, exhibits additive or synergistic therapeutic effects. In vivo, in a neutropenic mouse thigh infection model, exhibits a therapeutic effect in inhibiting bacterial proliferation. This chain is LC-AMP precursor 3, found in Lycosa coelestis (Wolf spider).